The sequence spans 188 residues: Cytochrome c oxidase assembly protein CtaG (188 aa).

Residues 1 to 8 lie on the Cytoplasmic side of the membrane; sequence MSKKSNKN. Residues 9–31 form a helical; Signal-anchor for type II membrane protein membrane-spanning segment; that stretch reads LAFSLLGLIISMVLLSFASVPIY. Over 32–188 the chain is Periplasmic; the sequence is NLFCKVTGYG…SSLRGNYVSN (157 aa).

Belongs to the COX11/CtaG family.

The protein resides in the cell inner membrane. Exerts its effect at some terminal stage of cytochrome c oxidase synthesis, probably by being involved in the insertion of the copper B into subunit I. The polypeptide is Cytochrome c oxidase assembly protein CtaG (Rickettsia conorii (strain ATCC VR-613 / Malish 7)).